The sequence spans 287 residues: Diphthine methyl ester synthase (287 aa).

S-adenosyl-L-methionine-binding positions include Leu-9, Asp-84, Gly-87, 112–113 (SI), Val-163, Val-221, and His-248.

Belongs to the diphthine synthase family.

The protein localises to the cytoplasm. It catalyses the reaction 2-[(3S)-amino-3-carboxypropyl]-L-histidyl-[translation elongation factor 2] + 4 S-adenosyl-L-methionine = diphthine methyl ester-[translation elongation factor 2] + 4 S-adenosyl-L-homocysteine + 3 H(+). It participates in protein modification; peptidyl-diphthamide biosynthesis. In terms of biological role, S-adenosyl-L-methionine-dependent methyltransferase that catalyzes four methylations of the modified target histidine residue in translation elongation factor 2 (EF-2), to form an intermediate called diphthine methyl ester. The four successive methylation reactions represent the second step of diphthamide biosynthesis. This is Diphthine methyl ester synthase (DPH5) from Gibberella zeae (strain ATCC MYA-4620 / CBS 123657 / FGSC 9075 / NRRL 31084 / PH-1) (Wheat head blight fungus).